We begin with the raw amino-acid sequence, 568 residues long: Zinc finger protein 648 (568 aa).

Basic and acidic residues predominate over residues 1 to 11 (MAQVDSQDRWG). The interval 1-106 (MAQVDSQDRW…MSGKASWSRD (106 aa)) is disordered. C2H2-type zinc fingers lie at residues 279-301 (YACE…RRLH), 307-329 (YQCS…IRTH), 335-358 (YPCP…RNMH), 364-386 (FPCS…QRTH), 392-414 (FRCP…QRVH), 420-442 (FPCP…QTLH), 448-470 (FKCA…QRIH), 476-498 (FPCT…QQIH), 504-526 (FLCA…IRMH), and 532-554 (YQCE…RAKH). The disordered stretch occupies residues 548–568 (QRHRAKHGTCKKEPIPSSSDE).

This sequence belongs to the krueppel C2H2-type zinc-finger protein family.

The protein resides in the nucleus. Its function is as follows. May be involved in transcriptional regulation. This Homo sapiens (Human) protein is Zinc finger protein 648 (ZNF648).